The chain runs to 99 residues: Putative regulatory protein Kole_1849 (99 aa).

This sequence belongs to the RemA family.

This chain is Putative regulatory protein Kole_1849, found in Kosmotoga olearia (strain ATCC BAA-1733 / DSM 21960 / TBF 19.5.1).